Here is a 482-residue protein sequence, read N- to C-terminus: Glutamyl-tRNA(Gln) amidotransferase subunit A (482 aa).

Residues lysine 75 and serine 150 each act as charge relay system in the active site. Residue serine 174 is the Acyl-ester intermediate of the active site.

The protein belongs to the amidase family. GatA subfamily. Heterotrimer of A, B and C subunits.

The catalysed reaction is L-glutamyl-tRNA(Gln) + L-glutamine + ATP + H2O = L-glutaminyl-tRNA(Gln) + L-glutamate + ADP + phosphate + H(+). Allows the formation of correctly charged Gln-tRNA(Gln) through the transamidation of misacylated Glu-tRNA(Gln) in organisms which lack glutaminyl-tRNA synthetase. The reaction takes place in the presence of glutamine and ATP through an activated gamma-phospho-Glu-tRNA(Gln). The protein is Glutamyl-tRNA(Gln) amidotransferase subunit A of Acaryochloris marina (strain MBIC 11017).